Reading from the N-terminus, the 567-residue chain is Interleukin-1 receptor-like 1 (567 aa).

The signal sequence occupies residues 1–26; the sequence is MIDRQRMGLWALAILTLPMYLTVTEG. Ig-like C2-type domains follow at residues 27-109 and 120-203; these read SKSS…LNVT and PDYL…VTAT. Residues 27–332 lie on the Extracellular side of the membrane; that stretch reads SKSSWGLENE…LRRKQPIDHR (306 aa). An intrachain disulfide couples C42 to C93. Residues N60, N101, N107, N146, N176, and N194 are each glycosylated (N-linked (GlcNAc...) asparagine). Intrachain disulfides connect C117–C157 and C139–C187. The flexible linker stretch occupies residues 204–216; it reads RSFTVEEKGFSMF. Positions 217 to 324 constitute an Ig-like C2-type 3 domain; it reads PVITNPPYNH…GMIRHTIRLR (108 aa). N225, N259, and N278 each carry an N-linked (GlcNAc...) asparagine glycan. 2 cysteine pairs are disulfide-bonded: C240/C308 and C243/C287. K326 is covalently cross-linked (Glycyl lysine isopeptide (Lys-Gly) (interchain with G-Cter in ubiquitin)). The helical transmembrane segment at 333-355 threads the bilayer; the sequence is SIYYIVAGCSLLLMFINVLVIVL. The Cytoplasmic portion of the chain corresponds to 356-567; that stretch reads KVFWIEVALF…GKACLDLKHF (212 aa). The TIR domain maps to 380-540; sequence KLYDAYIIYP…KFWKHVRYQM (161 aa). Residue S442 is modified to Phosphoserine; by GSK3-beta. The active site involves E466.

The protein belongs to the interleukin-1 receptor family. Interacts with MYD88, IRAK1, IRAK4, and TRAF6. Bound to its ligand IL33, interacts with IL1RAP to form the minimal interleukin-33 signaling complex with a 1:1:1 stoichiometry. Interacts with KIT (bound to KITLG/SCF). A mast cell-specific KITLG/SCF-induced interleukin-33 signaling complex contains IL1RL1, IL1RAP, KIT and MYD88. Interacts with TMED1. Phosphorylated by GSK3B at Ser-442; leading to proteasomal degradation. Post-translationally, ubiquitinated at Lys-326 in a FBXL19-mediated manner; leading to proteasomal degradation. Ubiquitination by TRAF6 via 'Lys-27'-linked polyubiquitination and deubiquitination by USP38 serves as a critical regulatory mechanism for fine-tuning IL1RL1-mediated inflammatory response. As to expression, predominantly expressed in hematopoietic tissues, and in macrophage, erythroid, epithelial and fibroblast cell lines. Isoform A is expressed in brain astrocytes and microglia. Isoform B is expressed in brain endothelial cells.

The protein resides in the cell membrane. It is found in the secreted. The enzyme catalyses NAD(+) + H2O = ADP-D-ribose + nicotinamide + H(+). Its function is as follows. Receptor for interleukin-33 (IL-33) which plays crucial roles in innate and adaptive immunity, contributing to tissue homeostasis and responses to environmental stresses together with coreceptor IL1RAP. Its stimulation recruits MYD88, IRAK1, IRAK4, and TRAF6, followed by phosphorylation of MAPK3/ERK1 and/or MAPK1/ERK2, MAPK14, and MAPK8. Possibly involved in helper T-cell function. Upon tissue injury, induces UCP2-dependent mitochondrial rewiring that attenuates the generation of reactive oxygen species and preserves the integrity of Krebs cycle required for persistent production of itaconate and subsequent GATA3-dependent differentiation of inflammation-resolving alternatively activated macrophages. In terms of biological role, inhibits IL-33 signaling. The protein is Interleukin-1 receptor-like 1 (Il1rl1) of Mus musculus (Mouse).